The sequence spans 267 residues: Regulatory protein RecX (267 aa).

Belongs to the RecX family.

It localises to the cytoplasm. Functionally, modulates RecA activity. The polypeptide is Regulatory protein RecX (Staphylococcus epidermidis (strain ATCC 12228 / FDA PCI 1200)).